Consider the following 171-residue polypeptide: Small ribosomal subunit protein uS13 (171 aa).

2 disordered regions span residues Met1–Lys22 and Arg142–Glu171. Over residues Lys10 to Lys22 the composition is skewed to basic and acidic residues. The segment covering Arg142–Gly158 has biased composition (basic residues).

This sequence belongs to the universal ribosomal protein uS13 family. In terms of assembly, part of the 30S ribosomal subunit. Forms a loose heterodimer with protein S19. Forms two bridges to the 50S subunit in the 70S ribosome.

Located at the top of the head of the 30S subunit, it contacts several helices of the 16S rRNA. In the 70S ribosome it contacts the 23S rRNA (bridge B1a) and protein L5 of the 50S subunit (bridge B1b), connecting the 2 subunits; these bridges are implicated in subunit movement. The polypeptide is Small ribosomal subunit protein uS13 (Thermoplasma volcanium (strain ATCC 51530 / DSM 4299 / JCM 9571 / NBRC 15438 / GSS1)).